A 330-amino-acid polypeptide reads, in one-letter code: Phosphate acyltransferase (330 aa).

This sequence belongs to the PlsX family. Homodimer. Probably interacts with PlsY.

It is found in the cytoplasm. It carries out the reaction a fatty acyl-[ACP] + phosphate = an acyl phosphate + holo-[ACP]. It participates in lipid metabolism; phospholipid metabolism. Its function is as follows. Catalyzes the reversible formation of acyl-phosphate (acyl-PO(4)) from acyl-[acyl-carrier-protein] (acyl-ACP). This enzyme utilizes acyl-ACP as fatty acyl donor, but not acyl-CoA. The chain is Phosphate acyltransferase from Lactobacillus delbrueckii subsp. bulgaricus (strain ATCC 11842 / DSM 20081 / BCRC 10696 / JCM 1002 / NBRC 13953 / NCIMB 11778 / NCTC 12712 / WDCM 00102 / Lb 14).